A 609-amino-acid polypeptide reads, in one-letter code: UvrABC system protein C (609 aa).

In terms of domain architecture, GIY-YIG spans 15 to 93 (SSAGVYRMYD…IKQYMPKYNV (79 aa)). Positions 202 to 237 (QQVVTNLVTKMEQAAEEFHYEQAAAYRDQITALRKV) constitute a UVR domain.

The protein belongs to the UvrC family. As to quaternary structure, interacts with UvrB in an incision complex.

Its subcellular location is the cytoplasm. The UvrABC repair system catalyzes the recognition and processing of DNA lesions. UvrC both incises the 5' and 3' sides of the lesion. The N-terminal half is responsible for the 3' incision and the C-terminal half is responsible for the 5' incision. The protein is UvrABC system protein C of Shewanella denitrificans (strain OS217 / ATCC BAA-1090 / DSM 15013).